Consider the following 186-residue polypeptide: Putative 5'(3')-deoxyribonucleotidase (186 aa).

Aspartate 6 functions as the Nucleophile in the catalytic mechanism. Mg(2+) is bound by residues aspartate 6, aspartate 8, and aspartate 137. The active-site Proton donor is aspartate 8.

The protein belongs to the 5'(3')-deoxyribonucleotidase family. It depends on Mg(2+) as a cofactor.

Its function is as follows. Dephosphorylates the 5' and 2'(3')-phosphates of deoxyribonucleotides. The polypeptide is Putative 5'(3')-deoxyribonucleotidase (Bordetella pertussis (strain Tohama I / ATCC BAA-589 / NCTC 13251)).